The following is a 125-amino-acid chain: NADPH-dependent 7-cyano-7-deazaguanine reductase (125 aa).

The Thioimide intermediate role is filled by Cys41. Catalysis depends on Asp48, which acts as the Proton donor. Substrate-binding positions include 63 to 65 (IEL) and 82 to 83 (HE).

The protein belongs to the GTP cyclohydrolase I family. QueF type 1 subfamily.

It is found in the cytoplasm. It carries out the reaction 7-aminomethyl-7-carbaguanine + 2 NADP(+) = 7-cyano-7-deazaguanine + 2 NADPH + 3 H(+). It participates in tRNA modification; tRNA-queuosine biosynthesis. Catalyzes the NADPH-dependent reduction of 7-cyano-7-deazaguanine (preQ0) to 7-aminomethyl-7-deazaguanine (preQ1). In Sulfurovum sp. (strain NBC37-1), this protein is NADPH-dependent 7-cyano-7-deazaguanine reductase.